We begin with the raw amino-acid sequence, 555 residues long: Formate--tetrahydrofolate ligase (555 aa).

65-72 (TPAGEGKT) contacts ATP.

The protein belongs to the formate--tetrahydrofolate ligase family.

It catalyses the reaction (6S)-5,6,7,8-tetrahydrofolate + formate + ATP = (6R)-10-formyltetrahydrofolate + ADP + phosphate. Its pathway is one-carbon metabolism; tetrahydrofolate interconversion. In Caldanaerobacter subterraneus subsp. tengcongensis (strain DSM 15242 / JCM 11007 / NBRC 100824 / MB4) (Thermoanaerobacter tengcongensis), this protein is Formate--tetrahydrofolate ligase.